Consider the following 303-residue polypeptide: Lipoyl synthase (303 aa).

7 residues coordinate [4Fe-4S] cluster: C40, C45, C51, C67, C71, C74, and S280. The Radical SAM core domain maps to 53–269; the sequence is AVRKTATFMI…KEIALSKGFS (217 aa).

It belongs to the radical SAM superfamily. Lipoyl synthase family. Requires [4Fe-4S] cluster as cofactor.

It is found in the cytoplasm. The catalysed reaction is [[Fe-S] cluster scaffold protein carrying a second [4Fe-4S](2+) cluster] + N(6)-octanoyl-L-lysyl-[protein] + 2 oxidized [2Fe-2S]-[ferredoxin] + 2 S-adenosyl-L-methionine + 4 H(+) = [[Fe-S] cluster scaffold protein] + N(6)-[(R)-dihydrolipoyl]-L-lysyl-[protein] + 4 Fe(3+) + 2 hydrogen sulfide + 2 5'-deoxyadenosine + 2 L-methionine + 2 reduced [2Fe-2S]-[ferredoxin]. It functions in the pathway protein modification; protein lipoylation via endogenous pathway; protein N(6)-(lipoyl)lysine from octanoyl-[acyl-carrier-protein]. Its function is as follows. Catalyzes the radical-mediated insertion of two sulfur atoms into the C-6 and C-8 positions of the octanoyl moiety bound to the lipoyl domains of lipoate-dependent enzymes, thereby converting the octanoylated domains into lipoylated derivatives. This chain is Lipoyl synthase, found in Halalkalibacterium halodurans (strain ATCC BAA-125 / DSM 18197 / FERM 7344 / JCM 9153 / C-125) (Bacillus halodurans).